Consider the following 175-residue polypeptide: Large ribosomal subunit protein uL10 (175 aa).

This sequence belongs to the universal ribosomal protein uL10 family. Part of the ribosomal stalk of the 50S ribosomal subunit. The N-terminus interacts with L11 and the large rRNA to form the base of the stalk. The C-terminus forms an elongated spine to which L12 dimers bind in a sequential fashion forming a multimeric L10(L12)X complex.

Functionally, forms part of the ribosomal stalk, playing a central role in the interaction of the ribosome with GTP-bound translation factors. In Xylella fastidiosa (strain M12), this protein is Large ribosomal subunit protein uL10.